The chain runs to 143 residues: 3-hydroxyacyl-[acyl-carrier-protein] dehydratase FabZ (143 aa).

Histidine 49 is a catalytic residue.

This sequence belongs to the thioester dehydratase family. FabZ subfamily.

The protein resides in the cytoplasm. The catalysed reaction is a (3R)-hydroxyacyl-[ACP] = a (2E)-enoyl-[ACP] + H2O. Its function is as follows. Involved in unsaturated fatty acids biosynthesis. Catalyzes the dehydration of short chain beta-hydroxyacyl-ACPs and long chain saturated and unsaturated beta-hydroxyacyl-ACPs. The sequence is that of 3-hydroxyacyl-[acyl-carrier-protein] dehydratase FabZ from Ehrlichia chaffeensis (strain ATCC CRL-10679 / Arkansas).